We begin with the raw amino-acid sequence, 236 residues long: Giant extracellular hemoglobin linker 2 chain (236 aa).

One can recognise an LDL-receptor class A domain in the interval 66–108 (NGCEPRHFQCGGSAMECISDLLTCDGSPDCANGADEDSDVCHI). Cystine bridges form between cysteine 68/cysteine 82, cysteine 75/cysteine 95, and cysteine 89/cysteine 106.

Disulfide-linked dimer of identical chains. A model is proposed for the subunit structure of the Tylorrhynchus hemoglobin, consisting of 216 polypeptides chains, 192 heme-containing chains, and 24 linker chains.

Functionally, acts as a linker for the assembly of heme-containing chains in the construction of giant hemoglobin. The polypeptide is Giant extracellular hemoglobin linker 2 chain (Tylorrhynchus heterochetus (Japanese palolo worm)).